Here is a 250-residue protein sequence, read N- to C-terminus: Probable aquaporin TIP-type (250 aa).

2 helical membrane-spanning segments follow: residues 22–42 and 56–76; these read AGLA…GSGI and AGLI…VSVG. The short motif at 85-87 is the NPA 1 element; that stretch reads NPA. Transmembrane regions (helical) follow at residues 104–124, 138–158, and 170–190; these read IVYI…LVFV, VGVG…VYTV, and IGII…LVGG. The short motif at 198–200 is the NPA 2 element; sequence NPA. Residues 218-238 form a helical membrane-spanning segment; sequence YWAGPLIGGGIAGLVYEVLFI.

Belongs to the MIP/aquaporin (TC 1.A.8) family. TIP (TC 1.A.8.10) subfamily.

It is found in the membrane. Its function is as follows. Aquaporins facilitate the transport of water and small neutral solutes across cell membranes. May have a role in buffering osmotic fluctations in the highly compartmented vacuole of arbuscule cells. The polypeptide is Probable aquaporin TIP-type (AQP1) (Medicago truncatula (Barrel medic)).